We begin with the raw amino-acid sequence, 341 residues long: Serpentine receptor class epsilon-12 (341 aa).

The next 7 helical transmembrane spans lie at 30–50, 57–77, 101–121, 140–160, 167–187, 230–250, and 262–282; these read TAFY…LFSA, FTLV…AIIV, AMTF…FSIL, YISY…AILL, IFVV…NQFL, LNFI…SVLF, and ICSL…PQIM.

This sequence belongs to the nematode receptor-like protein sre family.

The protein resides in the membrane. The polypeptide is Serpentine receptor class epsilon-12 (sre-12) (Caenorhabditis elegans).